The chain runs to 299 residues: NADH-cytochrome b5 reductase 2 (299 aa).

Residues 13–35 (SFKVLAPFAAAVGSVGIAYQYST) form a helical membrane-spanning segment. The FAD-binding FR-type domain maps to 50 to 154 (DEWIDLKLAK…KGPVVKWKWE (105 aa)). 157 to 192 (QYKSIALIGGGTGITPLYQLMHEITKNPEDKTKVNL) contributes to the FAD binding site.

Belongs to the flavoprotein pyridine nucleotide cytochrome reductase family. It depends on FAD as a cofactor.

The protein resides in the mitochondrion outer membrane. The enzyme catalyses 2 Fe(III)-[cytochrome b5] + NADH = 2 Fe(II)-[cytochrome b5] + NAD(+) + H(+). May mediate the reduction of outer membrane cytochrome b5. This Debaryomyces hansenii (strain ATCC 36239 / CBS 767 / BCRC 21394 / JCM 1990 / NBRC 0083 / IGC 2968) (Yeast) protein is NADH-cytochrome b5 reductase 2 (MCR1).